The sequence spans 320 residues: Heterogeneous nuclear ribonucleoprotein A1 (320 aa).

N-acetylmethionine is present on Met-1. Ser-2 is subject to N-acetylserine; in Heterogeneous nuclear ribonucleoprotein A1, N-terminally processed. At Ser-2 the chain carries Phosphoserine. N6-acetyllysine; alternate is present on Lys-3. Residue Lys-3 forms a Glycyl lysine isopeptide (Lys-Gly) (interchain with G-Cter in SUMO2); alternate linkage. 2 positions are modified to phosphoserine: Ser-4 and Ser-6. The globular A domain stretch occupies residues 4 to 94 (SESPKEPEQL…EPKRAVSRED (91 aa)). Lys-8 participates in a covalent cross-link: Glycyl lysine isopeptide (Lys-Gly) (interchain with G-Cter in SUMO2). 2 consecutive RRM domains span residues 14–97 (RKLF…DSQR) and 105–184 (KKIF…LSKQ). Ser-22 is modified (phosphoserine). Lys-78 is covalently cross-linked (Glycyl lysine isopeptide (Lys-Gly) (interchain with G-Cter in SUMO2)). A globular B domain region spans residues 95–185 (SQRPGAHLTV…EVRKALSKQE (91 aa)). A Glycyl lysine isopeptide (Lys-Gly) (interchain with G-Cter in SUMO) cross-link involves residue Lys-113. Residues Lys-179 and Lys-183 each participate in a glycyl lysine isopeptide (Lys-Gly) (interchain with G-Cter in SUMO2) cross-link. The disordered stretch occupies residues 182-216 (SKQEMASASSSQRGRSGSGNFGGGRGGGFGGNDNF). Residue Ser-192 is modified to Phosphoserine; by MKNK2. Position 194 is an asymmetric dimethylarginine; alternate (Arg-194). Arg-194 carries the post-translational modification Dimethylated arginine; alternate. Arg-194 is subject to Omega-N-methylarginine; alternate. Residues 197–216 (SGSGNFGGGRGGGFGGNDNF) are compositionally biased toward gly residues. At Ser-199 the chain carries Phosphoserine. Residues Arg-206, Arg-218, Arg-225, and Arg-232 each carry the asymmetric dimethylarginine; alternate modification. A Dimethylated arginine; alternate modification is found at Arg-206. 4 positions are modified to omega-N-methylarginine; alternate: Arg-206, Arg-218, Arg-225, and Arg-232. Residues 218–240 (RGGNFSGRGGFGGSRGGGGYGGS) are RNA-binding RGG-box. Arg-225 bears the Dimethylated arginine; alternate mark. Residues 268–305 (NQSSNFGPMKGGNFGGRSLGPYGGGGQYFAKPRNQGGY) are nuclear targeting sequence. Over residues 277 to 294 (KGGNFGGRSLGPYGGGGQ) the composition is skewed to gly residues. The disordered stretch occupies residues 277–320 (KGGNFGGRSLGPYGGGGQYFAKPRNQGGYGGSSSSSSYGSGRRF). Arg-284 carries the post-translational modification Omega-N-methylarginine. Position 285 is a phosphoserine (Ser-285). At Lys-298 the chain carries N6-acetyllysine; alternate. Residue Lys-298 forms a Glycyl lysine isopeptide (Lys-Gly) (interchain with G-Cter in SUMO2); alternate linkage. The residue at position 300 (Arg-300) is an Omega-N-methylarginine. Low complexity predominate over residues 308–320 (SSSSSSYGSGRRF). Residue Ser-309 is modified to Phosphoserine. Residues Ser-310, Ser-311, and Ser-312 each carry the phosphoserine; by MKNK2 modification. Phosphoserine is present on residues Ser-313 and Ser-316. Position 318 is an omega-N-methylarginine (Arg-318).

As to quaternary structure, identified in the spliceosome C complex. Identified in a IGF2BP1-dependent mRNP granule complex containing untranslated mRNAs. Interacts with SEPT6, C9orf72, KHDRBS1, UBQLN2. Interacts with PPIA/CYPA. Post-translationally, sumoylated.

It localises to the nucleus. Its subcellular location is the cytoplasm. In terms of biological role, involved in the packaging of pre-mRNA into hnRNP particles, transport of poly(A) mRNA from the nucleus to the cytoplasm and modulation of splice site selection. Plays a role in the splicing of pyruvate kinase PKM by binding repressively to sequences flanking PKM exon 9, inhibiting exon 9 inclusion and resulting in exon 10 inclusion and production of the PKM M2 isoform. Binds to the IRES and thereby inhibits the translation of the apoptosis protease activating factor APAF1. May bind to specific miRNA hairpins. The polypeptide is Heterogeneous nuclear ribonucleoprotein A1 (HNRNPA1) (Macaca mulatta (Rhesus macaque)).